The sequence spans 158 residues: Single-stranded DNA-binding protein 2 (158 aa).

The 107-residue stretch at 1 to 107 (MNETIVCVVG…IDALAVGHDL (107 aa)) folds into the SSB domain. The disordered stretch occupies residues 109–158 (RGTSAFRRPSAKDGEAGVSPAARPEPNWETEPGSQPSVEHQPQPEPAGVT).

In terms of assembly, homotetramer.

The protein is Single-stranded DNA-binding protein 2 (ssb2) of Streptomyces avermitilis (strain ATCC 31267 / DSM 46492 / JCM 5070 / NBRC 14893 / NCIMB 12804 / NRRL 8165 / MA-4680).